Here is a 482-residue protein sequence, read N- to C-terminus: Proline--tRNA ligase (482 aa).

It belongs to the class-II aminoacyl-tRNA synthetase family. ProS type 3 subfamily. Homodimer.

It localises to the cytoplasm. The enzyme catalyses tRNA(Pro) + L-proline + ATP = L-prolyl-tRNA(Pro) + AMP + diphosphate. Functionally, catalyzes the attachment of proline to tRNA(Pro) in a two-step reaction: proline is first activated by ATP to form Pro-AMP and then transferred to the acceptor end of tRNA(Pro). This Natronomonas pharaonis (strain ATCC 35678 / DSM 2160 / CIP 103997 / JCM 8858 / NBRC 14720 / NCIMB 2260 / Gabara) (Halobacterium pharaonis) protein is Proline--tRNA ligase.